We begin with the raw amino-acid sequence, 137 residues long: Peptide methionine sulfoxide reductase MsrB (137 aa).

A MsrB domain is found at 7–129 (PGELKNGLSE…NSASLSFTDE (123 aa)). Zn(2+) contacts are provided by C46, C49, C95, and C98. C118 (nucleophile) is an active-site residue.

This sequence belongs to the MsrB Met sulfoxide reductase family. Zn(2+) is required as a cofactor.

It carries out the reaction L-methionyl-[protein] + [thioredoxin]-disulfide + H2O = L-methionyl-(R)-S-oxide-[protein] + [thioredoxin]-dithiol. This is Peptide methionine sulfoxide reductase MsrB from Klebsiella pneumoniae (strain 342).